The primary structure comprises 227 residues: Phosphoglycolate phosphatase (227 aa).

Asp-8 serves as the catalytic Nucleophile. The Mg(2+) site is built by Asp-8 and Asp-10. Residue Lys-150 participates in substrate binding. Mg(2+) is bound by residues Asp-173 and Asp-177.

Belongs to the archaeal SPP-like hydrolase family. Mg(2+) is required as a cofactor.

It catalyses the reaction 2-phosphoglycolate + H2O = glycolate + phosphate. Its function is as follows. Catalyzes the dephosphorylation of 2-phosphoglycolate. The protein is Phosphoglycolate phosphatase of Sulfolobus acidocaldarius (strain ATCC 33909 / DSM 639 / JCM 8929 / NBRC 15157 / NCIMB 11770).